Consider the following 350-residue polypeptide: Ferredoxin--NADP reductase (350 aa).

Thr-25, Glu-44, Gln-52, Tyr-57, Val-97, Phe-132, Asp-298, and Ser-339 together coordinate FAD.

The protein belongs to the ferredoxin--NADP reductase type 2 family. As to quaternary structure, homodimer. The cofactor is FAD.

It carries out the reaction 2 reduced [2Fe-2S]-[ferredoxin] + NADP(+) + H(+) = 2 oxidized [2Fe-2S]-[ferredoxin] + NADPH. This is Ferredoxin--NADP reductase from Chlorobium limicola (strain DSM 245 / NBRC 103803 / 6330).